A 453-amino-acid chain; its full sequence is Bifunctional protein GlmU (453 aa).

The pyrophosphorylase stretch occupies residues Met1–Lys225. UDP-N-acetyl-alpha-D-glucosamine-binding positions include Leu6–Gly9, Lys20, Gln71, Gly76–Thr77, Tyr98–Asp100, Gly135, Glu150, Asn165, and Asn223. Asp100 is a Mg(2+) binding site. Asn223 serves as a coordination point for Mg(2+). Positions Gln226–Ala246 are linker. The N-acetyltransferase stretch occupies residues Gly247–Ser453. Residues Arg329 and Lys347 each contribute to the UDP-N-acetyl-alpha-D-glucosamine site. His359 acts as the Proton acceptor in catalysis. The UDP-N-acetyl-alpha-D-glucosamine site is built by Tyr362 and Asn373. Acetyl-CoA-binding positions include Ala376, Asn382–Tyr383, Ser401, and Ala419.

It in the N-terminal section; belongs to the N-acetylglucosamine-1-phosphate uridyltransferase family. The protein in the C-terminal section; belongs to the transferase hexapeptide repeat family. In terms of assembly, homotrimer. Mg(2+) is required as a cofactor.

It localises to the cytoplasm. It carries out the reaction alpha-D-glucosamine 1-phosphate + acetyl-CoA = N-acetyl-alpha-D-glucosamine 1-phosphate + CoA + H(+). It catalyses the reaction N-acetyl-alpha-D-glucosamine 1-phosphate + UTP + H(+) = UDP-N-acetyl-alpha-D-glucosamine + diphosphate. The protein operates within nucleotide-sugar biosynthesis; UDP-N-acetyl-alpha-D-glucosamine biosynthesis; N-acetyl-alpha-D-glucosamine 1-phosphate from alpha-D-glucosamine 6-phosphate (route II): step 2/2. Its pathway is nucleotide-sugar biosynthesis; UDP-N-acetyl-alpha-D-glucosamine biosynthesis; UDP-N-acetyl-alpha-D-glucosamine from N-acetyl-alpha-D-glucosamine 1-phosphate: step 1/1. It participates in bacterial outer membrane biogenesis; LPS lipid A biosynthesis. Functionally, catalyzes the last two sequential reactions in the de novo biosynthetic pathway for UDP-N-acetylglucosamine (UDP-GlcNAc). The C-terminal domain catalyzes the transfer of acetyl group from acetyl coenzyme A to glucosamine-1-phosphate (GlcN-1-P) to produce N-acetylglucosamine-1-phosphate (GlcNAc-1-P), which is converted into UDP-GlcNAc by the transfer of uridine 5-monophosphate (from uridine 5-triphosphate), a reaction catalyzed by the N-terminal domain. This Paraburkholderia xenovorans (strain LB400) protein is Bifunctional protein GlmU.